Here is a 338-residue protein sequence, read N- to C-terminus: Tripartite motif-containing protein 44 (338 aa).

Disordered regions lie at residues 1 to 25 and 72 to 162; these read MASG…EPDE and ARGD…EFDP. Residues 95-162 show a composition bias toward acidic residues; that stretch reads EAGEGIESEE…ETEAESEFDP (68 aa). The stretch at 109–153 forms a coiled coil; the sequence is EEESETEEESEDESEEDSEEEMEDEQESEAEEDNQEEGESEAEGE. Residues 171–212 form a B box-type zinc finger; sequence VAKRKCPDHGLDLSTYCQEDKQLICVLCPVIGAHHGHHLSTL. Positions 176, 179, 198, and 204 each coordinate Zn(2+). A coiled-coil region spans residues 257-322; that stretch reads QQEFKKVQKV…QLDTSNESAE (66 aa). A disordered region spans residues 307 to 338; it reads MAQAKEQLDTSNESAEPKAEGDEEEPGGTDED. Positions 327-338 are enriched in acidic residues; it reads GDEEEPGGTDED.

Interacts (via coiled coil) with TRIM17 (via coiled coil).

May play a role in the process of differentiation and maturation of neuronal cells. May regulate the activity of TRIM17. Is a negative regulator of PAX6 expression. This Bos taurus (Bovine) protein is Tripartite motif-containing protein 44 (TRIM44).